The following is a 385-amino-acid chain: dTDP-4-dehydro-2,3,6-trideoxy-D-glucose 4-aminotransferase (385 aa).

An N6-(pyridoxal phosphate)lysine modification is found at Lys-182.

The protein belongs to the DegT/DnrJ/EryC1 family. In terms of assembly, homodimer. The cofactor is pyridoxal 5'-phosphate.

The enzyme catalyses dTDP-4-amino-2,3,4,6-tetradeoxy-alpha-D-erythro-hexopyranose + 2-oxoglutarate = dTDP-4-dehydro-2,3,6-trideoxy-alpha-D-hexopyranose + L-glutamate. Involved in the biosynthesis of forosamine ((4-dimethylamino)-2,3,4,6-tetradeoxy-alpha-D-threo-hexopyranose), a highly deoxygenated sugar component of several bioactive natural products such as the insecticidal spinosyns A and D. In the presence of pyridoxal 5'-phosphate (PLP) and alpha-ketoglutarate, catalyzes the C-4 transamination of dTDP-4-keto-2,3,6-trideoxy-alpha-D-glucose to yield dTDP-4-amino-2,3,4,6-tetradeoxy-alpha-D-glucose. It can also use pyruvate, but less efficiently than alpha-ketoglutarate. Also able to catalyze the C-4 transamination of dTDP-4-keto-2,6-dideoxy-alpha-D-glucose to yield dTDP-4-amino-2,4,6-trideoxy-D-glucose. This is dTDP-4-dehydro-2,3,6-trideoxy-D-glucose 4-aminotransferase from Saccharopolyspora spinosa.